A 513-amino-acid polypeptide reads, in one-letter code: uncharacterized protein (513 aa).

In terms of domain architecture, TRAM spans 3-61 (NLKIGQKLQLEIERMGINGEGIGVISGRLVFIPYALPGEEVLVEITENARNFSRAKLVK). Positions 309, 338, 359, and 407 each coordinate S-adenosyl-L-methionine. Residue Cys434 is the Nucleophile of the active site.

The protein belongs to the class I-like SAM-binding methyltransferase superfamily. RNA M5U methyltransferase family.

This is an uncharacterized protein from Lactococcus lactis subsp. lactis (strain IL1403) (Streptococcus lactis).